The sequence spans 189 residues: Nucleoside triphosphate pyrophosphatase (189 aa).

D70 serves as the catalytic Proton acceptor.

Belongs to the Maf family. Requires a divalent metal cation as cofactor.

Its subcellular location is the cytoplasm. It catalyses the reaction a ribonucleoside 5'-triphosphate + H2O = a ribonucleoside 5'-phosphate + diphosphate + H(+). It carries out the reaction a 2'-deoxyribonucleoside 5'-triphosphate + H2O = a 2'-deoxyribonucleoside 5'-phosphate + diphosphate + H(+). In terms of biological role, nucleoside triphosphate pyrophosphatase. May have a dual role in cell division arrest and in preventing the incorporation of modified nucleotides into cellular nucleic acids. The protein is Nucleoside triphosphate pyrophosphatase of Xylella fastidiosa (strain 9a5c).